A 204-amino-acid polypeptide reads, in one-letter code: Heart- and neural crest derivatives-expressed protein 1 (204 aa).

3 disordered regions span residues Met1 to His24, Ala57 to Ser115, and Leu172 to Asp204. Basic residues-rich tracts occupy residues Ala8–Pro22 and Leu98–Arg110. The 53-residue stretch at Arg100 to Leu152 folds into the bHLH domain. Thr113 carries the post-translational modification Phosphothreonine; by PLK4. At Ser115 the chain carries Phosphoserine; by PLK4.

Efficient DNA binding requires dimerization with another bHLH protein. Forms homodimers and heterodimers with TCF3 gene products E12 and E47, HAND2 and HEY1, HEY2 and HEYL (hairy-related transcription factors). Interacts with MDFIC. Interacts with SOX15; the interaction enhances HAND1-induced differentiation of trophoblast giant cells. Post-translationally, phosphorylation by PLK4 disrupts the interaction with MDFIC and leads to translocation into the nucleoplasm, allowing dimerization and transcription factor activity.

It is found in the nucleus. The protein resides in the nucleoplasm. The protein localises to the nucleolus. In terms of biological role, transcription factor that plays an essential role in both trophoblast giant cell differentiation and in cardiac morphogenesis. Binds the DNA sequence 5'-NRTCTG-3' (non-canonical E-box). Acts as a transcriptional repressor of SOX15. In the adult, could be required for ongoing expression of cardiac-specific genes. The sequence is that of Heart- and neural crest derivatives-expressed protein 1 (HAND1) from Ovis aries (Sheep).